We begin with the raw amino-acid sequence, 152 residues long: 3-hydroxyacyl-[acyl-carrier-protein] dehydratase FabZ (152 aa).

Residue histidine 58 is part of the active site.

Belongs to the thioester dehydratase family. FabZ subfamily.

The protein localises to the cytoplasm. It catalyses the reaction a (3R)-hydroxyacyl-[ACP] = a (2E)-enoyl-[ACP] + H2O. Functionally, involved in unsaturated fatty acids biosynthesis. Catalyzes the dehydration of short chain beta-hydroxyacyl-ACPs and long chain saturated and unsaturated beta-hydroxyacyl-ACPs. The sequence is that of 3-hydroxyacyl-[acyl-carrier-protein] dehydratase FabZ from Prochlorococcus marinus subsp. pastoris (strain CCMP1986 / NIES-2087 / MED4).